Consider the following 146-residue polypeptide: PSVQDAAAQLTADVKKDLRDSWKVLGSDKKGDGMALMTTLFNDHQETIAYFKRMGDVSQGMANSKLRGHSITLMYALQNFIDQLDSTDDLICVVEKFAVNHITRKISGAEFGKINGPMKKVLASKNFGDKYANAWAKLVGVVQAAL.

The 138-residue stretch at 9–146 folds into the Globin domain; it reads QLTADVKKDL…KLVGVVQAAL (138 aa). His-101 lines the heme b pocket.

Belongs to the globin family. As to quaternary structure, homodimer.

This chain is Globin-2B, found in Anadara trapezia (Sydney cockle).